Reading from the N-terminus, the 168-residue chain is ATP synthase F(1) complex subunit delta, mitochondrial (168 aa).

The transit peptide at 1-22 directs the protein to the mitochondrion; it reads MLPSALLRRPGLGRLVRQVRLY. N6-acetyllysine; alternate occurs at positions 136 and 165. N6-succinyllysine; alternate occurs at positions 136 and 165.

Belongs to the ATPase epsilon chain family. Component of the ATP synthase complex composed at least of ATP5F1A/subunit alpha, ATP5F1B/subunit beta, ATP5MC1/subunit c (homooctomer), MT-ATP6/subunit a, MT-ATP8/subunit 8, ATP5ME/subunit e, ATP5MF/subunit f, ATP5MG/subunit g, ATP5MK/subunit k, ATP5MJ/subunit j, ATP5F1C/subunit gamma, ATP5F1D/subunit delta, ATP5F1E/subunit epsilon, ATP5PF/subunit F6, ATP5PB/subunit b, ATP5PD/subunit d, ATP5PO/subunit OSCP. ATP synthase complex consists of a soluble F(1) head domain (subunits alpha(3) and beta(3)) - the catalytic core - and a membrane F(0) domain - the membrane proton channel (subunits c, a, 8, e, f, g, k and j). These two domains are linked by a central stalk (subunits gamma, delta, and epsilon) rotating inside the F1 region and a stationary peripheral stalk (subunits F6, b, d, and OSCP). Component of a complex composed at least by ATPIF1, ATP5F1A, ATP5F1B, ATP5F1C AND ATP5F1E.

The protein localises to the mitochondrion. The protein resides in the mitochondrion inner membrane. Functionally, subunit delta, of the mitochondrial membrane ATP synthase complex (F(1)F(0) ATP synthase or Complex V) that produces ATP from ADP in the presence of a proton gradient across the membrane which is generated by electron transport complexes of the respiratory chain. ATP synthase complex consist of a soluble F(1) head domain - the catalytic core - and a membrane F(1) domain - the membrane proton channel. These two domains are linked by a central stalk rotating inside the F(1) region and a stationary peripheral stalk. During catalysis, ATP synthesis in the catalytic domain of F(1) is coupled via a rotary mechanism of the central stalk subunits to proton translocation. In vivo, can only synthesize ATP although its ATP hydrolase activity can be activated artificially in vitro. With the central stalk subunit gamma, is essential for the biogenesis of F(1) catalytic part of the ATP synthase complex namely in the formation of F1 assembly intermediate. This is ATP synthase F(1) complex subunit delta, mitochondrial from Bos taurus (Bovine).